Here is a 243-residue protein sequence, read N- to C-terminus: Probable enoyl-CoA hydratase echA6 (243 aa).

This sequence belongs to the enoyl-CoA hydratase/isomerase family.

The enzyme catalyses a (3S)-3-hydroxyacyl-CoA = a (2E)-enoyl-CoA + H2O. It carries out the reaction a 4-saturated-(3S)-3-hydroxyacyl-CoA = a (3E)-enoyl-CoA + H2O. Its function is as follows. Could possibly oxidize fatty acids using specific components. The sequence is that of Probable enoyl-CoA hydratase echA6 (echA6) from Mycobacterium bovis (strain ATCC BAA-935 / AF2122/97).